The primary structure comprises 424 residues: UPF0229 protein Ping_2705 (424 aa).

The tract at residues 77-108 is disordered; that stretch reads PGNQDFIGGDRIERPPSGGAGGSGSGASDSGK.

Belongs to the UPF0229 family.

In Psychromonas ingrahamii (strain DSM 17664 / CCUG 51855 / 37), this protein is UPF0229 protein Ping_2705.